We begin with the raw amino-acid sequence, 20 residues long: 7.2 kDa cytotoxin RVV-7 (20 aa).

As to quaternary structure, monomer. Homodimerizes during storage at 30 degrees Celsius (observed after 3 days). As to expression, expressed by the venom gland.

The protein resides in the secreted. Its subcellular location is the target cell membrane. This three-finger cytotoxin shows cytotoxicity and direct nephrotoxicity. The cytotoxicity has been observed on B16F10 melanoma cells (EC(50)=2.56 uM) and on kidney proximal tubular epithelium LLCPK1 cells (EC(50)=4.79 uM); it is due to necrotic cell death and not to apoptosis. Direct nephrotoxicity has been deduced from binding to LLCPK1 cell line and to kidney membranes. In addition, after intravenous injection into mice tail vein, the toxin principally accumulates in kidney, but only minimally in blood, liver and brain. The polypeptide is 7.2 kDa cytotoxin RVV-7 (Daboia russelii (Russel's viper)).